We begin with the raw amino-acid sequence, 427 residues long: MSNNQILFERAQKTIPGGVNSPVRAFRSVGGTPRFVARAQGPYFWDADGKQYIDYIGSWGPMIVGHVHPEVLSAVQNVLADGFSFGAPTEAEIEIAEEICKLVPSIEQVRMVSSGTEATMSALRLARGFTGRSRIVKFEGCYHGHADSLLVKAGSGLLTFGNPTSAGVPADIAKHTTVLEYNNVAALEEAFGAFGDEIAAVIVEPVAGNMNLVRGTPEFLNALRALCTKHGAVLIFDEVMCGFRVALGGAQAYYGIAADLTCLGKVIGGGMPAAAFGGRRDIMAHLAPLGGVYQAGTLSGNPIAVAAGLKTLQLIQAPGFYDALTAQTKRLTDGLAAEARAAGVPFAADSIGAMFGLYFAERVPTSFAEVTKSDIARFNRFFHLMLDEGVYFAPSAYEAGFVSSTHDDAVIDATLAAARRAFAALAA.

The residue at position 265 (Lys-265) is an N6-(pyridoxal phosphate)lysine.

This sequence belongs to the class-III pyridoxal-phosphate-dependent aminotransferase family. HemL subfamily. Homodimer. The cofactor is pyridoxal 5'-phosphate.

It is found in the cytoplasm. It carries out the reaction (S)-4-amino-5-oxopentanoate = 5-aminolevulinate. It participates in porphyrin-containing compound metabolism; protoporphyrin-IX biosynthesis; 5-aminolevulinate from L-glutamyl-tRNA(Glu): step 2/2. This is Glutamate-1-semialdehyde 2,1-aminomutase from Burkholderia cenocepacia (strain ATCC BAA-245 / DSM 16553 / LMG 16656 / NCTC 13227 / J2315 / CF5610) (Burkholderia cepacia (strain J2315)).